Consider the following 579-residue polypeptide: Rho guanine nucleotide exchange factor 25 (579 aa).

2 disordered regions span residues 27–61 and 172–194; these read AVPG…GERE and VKAQ…EQKK. A DH domain is found at 199–375; sequence RSMFVLSELV…CFVPKRCNDM (177 aa). An important for binding to Rho GTPases region spans residues 317 to 338; the sequence is LGHRLQLSDLLIKPVQRIMKYQ. Positions 380–499 constitute a PH domain; the sequence is RLRGFEGKLT…ESQTNSLGRS (120 aa). Residues 472–498 form a sufficient to bind activated GNAQ region; the sequence is SQRDFLNALQSPIEYQRRESQTNSLGR. Disordered stretches follow at residues 487–516 and 546–579; these read QRRE…VSMH and LSET…EDEL.

Interacts with activated GNAQ and GNA11. Interacts with RHOA, CDC42 and RAC1. Interacts (via the DH domain) with POPDC1 (via the C-terminus cytoplasmic tail).

It is found in the cytoplasm. Its subcellular location is the myofibril. The protein localises to the sarcomere. The protein resides in the cell membrane. In terms of biological role, may play a role in actin cytoskeleton reorganization in different tissues since its activation induces formation of actin stress fibers. It works as a guanine nucleotide exchange factor for Rho family of small GTPases. Links specifically G alpha q/11-coupled receptors to RHOA activation. May be an important regulator of processes involved in axon and dendrite formation. In neurons seems to be an exchange factor primarily for RAC1. Involved in skeletal myogenesis. This Rattus norvegicus (Rat) protein is Rho guanine nucleotide exchange factor 25 (Arhgef25).